A 786-amino-acid polypeptide reads, in one-letter code: Diamine oxidase [copper-containing] 1, peroxisomal (786 aa).

Substrate is bound at residue 419–430 (AFDAGEDGLGKN). The active-site Proton acceptor is the Asp421. A disulfide bridge links Cys440 with Cys466. Residue 502–507 (VANYEY) coordinates substrate. The Schiff-base intermediate with substrate; via topaquinone role is filled by Tyr505. The residue at position 505 (Tyr505) is a 2',4',5'-topaquinone. 2 residues coordinate Cu cation: His555 and His557. Positions 710 and 711 each coordinate Mn(2+). Residue His721 participates in Cu cation binding.

It belongs to the copper/topaquinone oxidase family. In terms of assembly, homodimer. Cu cation is required as a cofactor. It depends on Zn(2+) as a cofactor. The cofactor is L-topaquinone. Topaquinone (TPQ) is generated by copper-dependent autoxidation of a specific tyrosyl residue. As to expression, mainly expressed in roots, and, to a lower extent, in leaves and stems.

It is found in the peroxisome. It carries out the reaction a primary methyl amine + O2 + H2O = an aldehyde + H2O2 + NH4(+). The enzyme catalyses N-methylputrescine + O2 + H2O = 4-methylaminobutanal + H2O2 + NH4(+). Its pathway is alkaloid biosynthesis; nicotine biosynthesis. It functions in the pathway amine and polyamine degradation; putrescine degradation. Functionally, involved in putrescine catabolism in peroxisomes. May also be involved in the biosynthesis of pyridine alkaloid natural products, leading mainly to the production of anabasine, anatabine, nicotine and nornicotine, effective deterrents against herbivores with antiparasitic and pesticide properties (neurotoxins); nornicotine serves as the precursor in the synthesis of the carcinogen compound N'-nitrosonornicotine (NNN). Oxidizes preferentially non-N-methylated amines. The polypeptide is Diamine oxidase [copper-containing] 1, peroxisomal (Nicotiana tabacum (Common tobacco)).